Here is a 39-residue protein sequence, read N- to C-terminus: Mu-like prophage FluMu protein com (39 aa).

Belongs to the com family.

The polypeptide is Mu-like prophage FluMu protein com (Haemophilus influenzae (strain ATCC 51907 / DSM 11121 / KW20 / Rd)).